The following is a 320-amino-acid chain: Polycomb complex protein BMI-1-A (320 aa).

An RING-type zinc finger spans residues 18–57; sequence CVLCGGYFIDATTIIECLHSFCKMCIVRYLETSKYCPICD. A Nuclear localization signal motif is present at residues 81-95; it reads KLVPGLFKNEMKRRR. The interval 234-320 is disordered; the sequence is ITHPQEGLNN…ALNGSSTSSG (87 aa). Over residues 262–281 the composition is skewed to low complexity; it reads VPSTSSPLPSPSTLVQPSQP. Polar residues predominate over residues 285–304; it reads HISSPINGTTMTSPNRQFNF.

Component of a PRC1-like complex. Homodimer. Interacts with cbx2.

It localises to the nucleus. Functionally, component of a Polycomb group (PcG) multiprotein PRC1-like complex, a complex class required to maintain the transcriptionally repressive state of many genes, including Hox genes, throughout development. PcG PRC1 complex acts via chromatin remodeling and modification of histones; it mediates monoubiquitination of histone H2A 'Lys-119', rendering chromatin heritably changed in its expressibility. In the PRC1 complex, it is required to stimulate the E3 ubiquitin-protein ligase activity of rnf2. This chain is Polycomb complex protein BMI-1-A (bmi1a), found in Danio rerio (Zebrafish).